A 288-amino-acid polypeptide reads, in one-letter code: Bifunctional protein FolD (288 aa).

NADP(+)-binding positions include 165–167 (GRS), serine 190, and isoleucine 231.

The protein belongs to the tetrahydrofolate dehydrogenase/cyclohydrolase family. As to quaternary structure, homodimer.

It carries out the reaction (6R)-5,10-methylene-5,6,7,8-tetrahydrofolate + NADP(+) = (6R)-5,10-methenyltetrahydrofolate + NADPH. The enzyme catalyses (6R)-5,10-methenyltetrahydrofolate + H2O = (6R)-10-formyltetrahydrofolate + H(+). It functions in the pathway one-carbon metabolism; tetrahydrofolate interconversion. Catalyzes the oxidation of 5,10-methylenetetrahydrofolate to 5,10-methenyltetrahydrofolate and then the hydrolysis of 5,10-methenyltetrahydrofolate to 10-formyltetrahydrofolate. The chain is Bifunctional protein FolD from Nitrosospira multiformis (strain ATCC 25196 / NCIMB 11849 / C 71).